The primary structure comprises 284 residues: MQNKIVRIGDINVANDNPFVLFGGMNVLESRDMAMQVCEKYVEVTNKLGVPYVFKASFDKANRSSIHSYRGPGMEEGLKIFQELKQTFGVKIITDVHEIYQCKPVAEVADVIQLPAFLARQTDLVEAMARTGAVINVKKPQFLSPGQMGNIVEKIEECGNDKVILCDRGSNFGYDNLVVDMLGFGVMKKVSKGAPVIFDVTHSLQCRDPFGAASGGRRDQVTELARAGLAVGIAGLFLEAHPDPNNAKCDGPSALPLSVLEGFVSQMKALDDLVKSFPQLDTSK.

The protein belongs to the KdsA family.

Its subcellular location is the cytoplasm. The enzyme catalyses D-arabinose 5-phosphate + phosphoenolpyruvate + H2O = 3-deoxy-alpha-D-manno-2-octulosonate-8-phosphate + phosphate. It participates in carbohydrate biosynthesis; 3-deoxy-D-manno-octulosonate biosynthesis; 3-deoxy-D-manno-octulosonate from D-ribulose 5-phosphate: step 2/3. The protein operates within bacterial outer membrane biogenesis; lipopolysaccharide biosynthesis. The chain is 2-dehydro-3-deoxyphosphooctonate aldolase from Mannheimia succiniciproducens (strain KCTC 0769BP / MBEL55E).